A 580-amino-acid polypeptide reads, in one-letter code: Mucin-1 (580 aa).

Positions 1–22 (MTPDIQAPFLSLLLLFPVLTVA) are cleaved as a signal peptide. At 23 to 489 (NVPTLTTSDS…GSGVPGWGIA (467 aa)) the chain is on the extracellular side. The span at 28-37 (TTSDSINPRR) shows a compositional bias: polar residues. Residues 28–359 (TTSDSINPRR…SIALSTSSNP (332 aa)) are disordered. Positions 38–88 (TTPVSTTQSSPTSSPTKETSWSTTTTLLTASSPAPSPAASPGHDGASTPTS) are enriched in low complexity. 11 consecutive repeat copies span residues 70-89 (PAPS…PTSS), 90-109 (PAPS…PTSS), 110-129 (PAPS…PTSS), 130-149 (PAPS…PTSS), 150-169 (PAPS…PTGS), 170-189 (PAPS…PTSS), 190-209 (PAPS…PTGS), 210-229 (PAPS…PTSS), 230-249 (PAPS…PTGS), 250-269 (PAPS…LTSS), and 270-289 (PAPS…PTSS). Residues 70–289 (PAPSPAASPG…QHGASSPTSS (220 aa)) form an 11 X 20 AA approximate tandem repeats of P-A-P-S-P-A-A-S-P-G-H-D-G-A-S-T-P-T-S-S region. O-linked (GalNAc...) serine glycosylation is found at S73, S77, and S84. O-linked (GalNAc...) threonine glycosylation is found at T85 and T87. 2 O-linked (GalNAc...) serine glycosylation sites follow: S88 and S89. Low complexity-rich tracts occupy residues 96–108 (ASPG…TPTS), 116–128 (ASPG…TPTS), 136–148 (ASPG…TPTS), 156–168 (ASPG…SPTG), 176–188 (ASPG…TPTS), 196–208 (ASPG…SPTG), 216–228 (ASPG…TPTS), 236–248 (ASPG…SPTG), and 256–306 (ASPG…MVTS). Residue N161 is glycosylated (N-linked (GlcNAc...) asparagine). The N-linked (GlcNAc...) asparagine glycan is linked to N201. The N-linked (GlcNAc...) asparagine glycan is linked to N241. Residues 308-344 (HKGTSSRATMTPVSKGTPSSVPSSETAPTAASHITRT) show a composition bias toward polar residues. A compositionally biased stretch (low complexity) spans 345 to 357 (AASSPSIALSTSS). The 108-residue stretch at 368 to 475 (RVSLYFLSFR…VSVYSAPFPS (108 aa)) folds into the SEA domain. 2 N-linked (GlcNAc...) asparagine glycosylation sites follow: N384 and N460. The chain crosses the membrane as a helical span at residues 490 to 510 (LLVLVCVLVALAIIYLIALVV). 2 S-palmitoyl cysteine lipidation sites follow: C511 and C513. Residues 511–580 (CQCGRKKCEQ…TNLAATSANL (70 aa)) are Cytoplasmic-facing. Residues 519 to 555 (EQLDVFPTLDAYHPMSEYSTYHTHGRYVPPGSTKRSP) are interaction with P53. Y530 bears the Phosphotyrosine; by PDGFR mark. The Interaction with GRB2 signature appears at 530–533 (YHPM). Position 539 is a phosphotyrosine (Y539). A disordered region spans residues 544 to 563 (RYVPPGSTKRSPYEEVSAGN). Y545 bears the Phosphotyrosine; by PDGFR mark. The segment at 550–557 (STKRSPYE) is required for interaction with GSK3B. Phosphothreonine; by PKC/PRKCD is present on T551. At S554 the chain carries Phosphoserine; by GSK3-beta. Residue Y556 is modified to Phosphotyrosine; by CSK, EGFR and SRC. The Interaction with SRC and ESR1 signature appears at 556-559 (YEEV). The interval 560–568 (SAGNGGSNL) is required for interaction with beta- and gamma-catenins. Residue Y570 is modified to Phosphotyrosine. The short motif at 570 to 572 (YTN) is the Required for interaction with AP1S2 element.

In terms of assembly, the alpha subunit forms a tight, non-covalent heterodimeric complex with the proteolytically-released beta subunit. Binds directly the SH2 domain of GRB2, and forms a MUC1/GRB2/SOS1 complex involved in RAS signaling. The cytoplasmic tail (MUC1CT) interacts with several proteins such as, SRC, CTNNB1 and ERBs. Interaction with the SH2 domain of CSK decreases interaction with GSK3B. Interacts with CTNNB1/beta-catenin and JUP/gamma-catenin and promotes cell adhesion. Interaction with JUP/gamma-catenin is induced by heregulin. Binds PRKCD, ERBB2, ERBB3 and ERBB4. Heregulin (HRG) stimulates the interaction with ERBB2 and, to a much lesser extent, the interaction with ERBB3 and ERBB4. Interacts with P53 in response to DNA damage. Interacts with KLF4. Interacts with estrogen receptor alpha/ESR1, through its DNA-binding domain, and stimulates its transcription activity. Binds ADAM17. Highly glycosylated (N- and O-linked carbohydrates and sialic acid). O-linked glycosylation consists mainly of GalNAc, galactose, and sialic acid. The ratio from pools of milk from different dairy breeds is GalNAc: GlcNAc:galactose:mannose:sialic acid is 14:1:10:1:15. In terms of processing, proteolytic cleavage in the SEA domain occurs in the endoplasmic reticulum by an autoproteolytic mechanism and requires the full-length SEA domain as well as requiring a Ser, Thr or Cys residue at the P + 1 site. Ectodomain shedding is mediated by ADAM17 in uterine epithelial cells. Post-translationally, dual palmitoylation on cysteine residues in the CQC motif is required for recycling from endosomes back to the plasma membrane. Phosphorylated on tyrosines and serine residues in the C-terminal. Phosphorylation on tyrosines in the C-terminal increases the nuclear location of MUC1 and beta-catenin. Phosphorylation by PKC delta induces binding of MUC1 to beta-catenin/CTNNB1 and thus decreases the formation of the beta-catenin/E-cadherin complex. Src-mediated phosphorylation inhibits interaction with GSK3B. Csk- or Src- or EGFR-mediated phosphorylation on Tyr-556 increases binding to beta-catenin/CTNNB1. GSK3B-mediated phosphorylation on Ser-554 decreases this interaction but restores the formation of the beta-cadherin/E-cadherin complex. On T-cell receptor activation, phosphorylated by LCK. PDGFR-mediated phosphorylation increases nuclear colocalization of MUC1CT and CTNNB1. As to expression, expressed on the apical surface of epithelia cells, and on the milk fat globule membrane (MGGM).

Its subcellular location is the apical cell membrane. The protein localises to the cell membrane. The protein resides in the cytoplasm. It localises to the nucleus. Functionally, the alpha subunit has cell adhesive properties. May provide a protective layer on epithelial cells against bacterial and enzyme attack. Its function is as follows. The beta subunit contains a C-terminal domain which is involved in cell signaling, through phosphorylations and protein-protein interactions. Modulates signaling in ERK, Src and NF-kappa-B pathways. In activated T-cells, influences directly or indirectly the Ras/MAPK pathway. Promotes tumor progression. Regulates P53-mediated transcription and determines cell fate in the genotoxic stress response. Binds, together with KLF4, the PE21 promoter element of P53 and represses P53 activity. This is Mucin-1 (MUC1) from Bos taurus (Bovine).